An 815-amino-acid polypeptide reads, in one-letter code: DNA topoisomerase 1 (815 aa).

The 117-residue stretch at 3 to 119 (KHLLIVESPA…QRIVFTEITP (117 aa)) folds into the Toprim domain. Mg(2+) contacts are provided by Glu-9 and Asp-82. The region spanning 133–573 (ASDLVDAQQA…KFWVPFKELV (441 aa)) is the Topo IA-type catalytic domain. The segment at 167-172 (SAGRVQ) is interaction with DNA. Tyr-308 functions as the O-(5'-phospho-DNA)-tyrosine intermediate in the catalytic mechanism. Residues 759–815 (TGKPARKNFSTKKTATKNETRKQTTKKRTTDAKATKKVSDKPVKKQIKKRIAPNITQ) form a disordered region. The segment covering 774–801 (TKNETRKQTTKKRTTDAKATKKVSDKPV) has biased composition (basic and acidic residues).

This sequence belongs to the type IA topoisomerase family. In terms of assembly, monomer. Requires Mg(2+) as cofactor.

It carries out the reaction ATP-independent breakage of single-stranded DNA, followed by passage and rejoining.. Its function is as follows. Releases the supercoiling and torsional tension of DNA, which is introduced during the DNA replication and transcription, by transiently cleaving and rejoining one strand of the DNA duplex. Introduces a single-strand break via transesterification at a target site in duplex DNA. The scissile phosphodiester is attacked by the catalytic tyrosine of the enzyme, resulting in the formation of a DNA-(5'-phosphotyrosyl)-enzyme intermediate and the expulsion of a 3'-OH DNA strand. The free DNA strand then undergoes passage around the unbroken strand, thus removing DNA supercoils. Finally, in the religation step, the DNA 3'-OH attacks the covalent intermediate to expel the active-site tyrosine and restore the DNA phosphodiester backbone. The chain is DNA topoisomerase 1 from Xylella fastidiosa (strain Temecula1 / ATCC 700964).